The chain runs to 580 residues: mRNA cap guanine-N(7) methyltransferase (580 aa).

Composition is skewed to polar residues over residues 1–17 (MSGS…TSLI) and 25–53 (EATS…NSDL). Residues 1–222 (MSGSKQGSEK…PVEAQPYSRL (222 aa)) are disordered. Over residues 54 to 67 (KVTENKPKNTEMKP) the composition is skewed to basic and acidic residues. The segment covering 69–90 (DPNTNASTTENTPITTSNAQVS) has biased composition (polar residues). Positions 102 to 154 (REPEEAQNRYDRYVPRVDNRRRGEPRVAEVRQDPRYAKYLRQDQEERRIRRPD) are enriched in basic and acidic residues. Over residues 191 to 214 (ESEENGDEQQGDDEEETPGNEEPV) the composition is skewed to acidic residues. Positions 271–579 (SPIYKLRNFN…FYLGFAFEKL (309 aa)) constitute an mRNA cap 0 methyltransferase domain. MRNA is bound at residue 280 to 281 (NN). S-adenosyl-L-methionine contacts are provided by Lys-284, Cys-308, Asp-330, Asp-376, Gln-406, and Tyr-411.

Belongs to the class I-like SAM-binding methyltransferase superfamily. mRNA cap 0 methyltransferase family.

It is found in the nucleus. The catalysed reaction is a 5'-end (5'-triphosphoguanosine)-ribonucleoside in mRNA + S-adenosyl-L-methionine = a 5'-end (N(7)-methyl 5'-triphosphoguanosine)-ribonucleoside in mRNA + S-adenosyl-L-homocysteine. In terms of biological role, responsible for methylating the 5'-cap structure of mRNAs. The polypeptide is mRNA cap guanine-N(7) methyltransferase (ABD1) (Meyerozyma guilliermondii (strain ATCC 6260 / CBS 566 / DSM 6381 / JCM 1539 / NBRC 10279 / NRRL Y-324) (Yeast)).